A 352-amino-acid chain; its full sequence is tRNA(Ile)-lysidine synthase (352 aa).

58-63 (SGGADS) is a binding site for ATP.

This sequence belongs to the tRNA(Ile)-lysidine synthase family.

The protein localises to the cytoplasm. The enzyme catalyses cytidine(34) in tRNA(Ile2) + L-lysine + ATP = lysidine(34) in tRNA(Ile2) + AMP + diphosphate + H(+). Ligates lysine onto the cytidine present at position 34 of the AUA codon-specific tRNA(Ile) that contains the anticodon CAU, in an ATP-dependent manner. Cytidine is converted to lysidine, thus changing the amino acid specificity of the tRNA from methionine to isoleucine. In Streptomyces coelicolor (strain ATCC BAA-471 / A3(2) / M145), this protein is tRNA(Ile)-lysidine synthase.